The chain runs to 200 residues: Membrane-spanning 4-domains subfamily A member 5 (200 aa).

At Met-1–Thr-52 the chain is on the cytoplasmic side. Residues Ile-53–Leu-73 form a helical membrane-spanning segment. Residues Lys-74–Pro-80 are Extracellular-facing. Residues Phe-81 to Phe-101 form a helical membrane-spanning segment. The Cytoplasmic segment spans residues Leu-102–Met-120. Residues Asn-121–Leu-141 form a helical membrane-spanning segment. Over Asp-142 to Val-159 the chain is Extracellular. Residues Thr-160–Ile-180 form a helical membrane-spanning segment. The Cytoplasmic segment spans residues Ser-181–Cys-200.

The protein belongs to the MS4A family. As to expression, expressed at high level in the testis. Detected also in the pancreas, heart and in the brain.

It localises to the membrane. Functionally, may be involved in signal transduction as a component of a multimeric receptor complex. This chain is Membrane-spanning 4-domains subfamily A member 5 (MS4A5), found in Homo sapiens (Human).